Here is a 346-residue protein sequence, read N- to C-terminus: MPINLKGRSLDSALNFTTAQINYLIDLAIDLNAVNTKLHIQNRPLAGKNIVLLFQKDSTRTRCAFEVAAFDLGMGCTYIGPSGSNFGKKESIEDTAKVLGSMYDGIEFRGFKQSDVDALVKYSGVPVWNGLTDAEHPTQMLADYMTIKELKGDLKGRKIVFAGDIKNNVARSLMIGAAFVGMDIVLVGPKAQHELVQNGAGYKEVFEQCQALFQLNGGSVSFSTDKLQAAKNADVIYTDVWLSLGEDFSLFEERIQELGQFQVDMAMIKAAKSDVIFLHCLPAFHDDHTSFSLEIKQKLGKKYPVVKTGAMEVTDTVFQSKHNMAFIQAENRLHTIKAVILATLGY.

Carbamoyl phosphate is bound by residues 58–61, Asn-85, Arg-109, and 136–139; these read STRT and HPTQ. Residues Asn-168, Asp-239, and 243–244 each bind L-ornithine; that span reads SL. Carbamoyl phosphate-binding positions include 280 to 281 and Arg-332; that span reads CL.

It belongs to the aspartate/ornithine carbamoyltransferase superfamily. OTCase family.

The protein localises to the cytoplasm. It catalyses the reaction carbamoyl phosphate + L-ornithine = L-citrulline + phosphate + H(+). Its pathway is amino-acid degradation; L-arginine degradation via ADI pathway; carbamoyl phosphate from L-arginine: step 2/2. Reversibly catalyzes the transfer of the carbamoyl group from carbamoyl phosphate (CP) to the N(epsilon) atom of ornithine (ORN) to produce L-citrulline. This chain is Ornithine carbamoyltransferase, catabolic, found in Mycoplasma pneumoniae (strain ATCC 29342 / M129 / Subtype 1) (Mycoplasmoides pneumoniae).